The chain runs to 1318 residues: Major tegument protein (1318 aa).

Belongs to the herpesviridae MTP family. As to quaternary structure, interacts with host DAXX; this interaction disrupts the chromatin remodeling complex ATRX:DAXX and thus allows viral transcription. Interacts with host SMC6; this interaction targets SMC5-SMC6 complex for proteasomal degradation.

Its subcellular location is the virion tegument. It localises to the host nucleus. In terms of biological role, tegument protein that plays a role in the inhibition of host intrinsic defenses to promote viral early gene activation. Interacts with host DAXX and thereby disrupts the complex between DAXX and ATRX. Suppresses the DAXX-ATRX dependent deposition of histone H3.3 on viral chromatin allowing viral transcription. Targets also host SMC5/6 for proteasomal degradation in a CUL7 and calpain-dependent manner to support nuclear membrane-less replication compartment formation and lytic virus replication. The sequence is that of Major tegument protein from Homo sapiens (Human).